Consider the following 74-residue polypeptide: Protein krueppel (74 aa).

4 consecutive C2H2-type zinc fingers follow at residues 1–4, 10–32, 38–60, and 66–74; these read ERTH, FECP…MRLH, YHCS…LRVH, and YACELCAAK.

It belongs to the krueppel C2H2-type zinc-finger protein family.

It localises to the nucleus. Functionally, krueppel is a gap class segmentation protein. This is Protein krueppel (Kr) from Apis mellifera (Honeybee).